The primary structure comprises 88 residues: Small ribosomal subunit protein uS15 (88 aa).

It belongs to the universal ribosomal protein uS15 family. In terms of assembly, part of the 30S ribosomal subunit. Forms a bridge to the 50S subunit in the 70S ribosome, contacting the 23S rRNA.

In terms of biological role, one of the primary rRNA binding proteins, it binds directly to 16S rRNA where it helps nucleate assembly of the platform of the 30S subunit by binding and bridging several RNA helices of the 16S rRNA. Its function is as follows. Forms an intersubunit bridge (bridge B4) with the 23S rRNA of the 50S subunit in the ribosome. The protein is Small ribosomal subunit protein uS15 of Mesomycoplasma hyopneumoniae (strain 232) (Mycoplasma hyopneumoniae).